Reading from the N-terminus, the 354-residue chain is Holliday junction branch migration complex subunit RuvB (354 aa).

A large ATPase domain (RuvB-L) region spans residues 5–197 (TDDFSAADLP…FGIVARLEFY (193 aa)). Residues Leu-36, Arg-37, Gly-78, Lys-81, Thr-82, Thr-83, 144–146 (EDY), Arg-187, Tyr-197, and Arg-234 contribute to the ATP site. Thr-82 contributes to the Mg(2+) binding site. A small ATPAse domain (RuvB-S) region spans residues 198–268 (TAEELGRIVR…IANKALAMLD (71 aa)). Residues 271–354 (PQGFDVMDRK…PPVSGNDMFT (84 aa)) form a head domain (RuvB-H) region. DNA-binding residues include Arg-307, Arg-326, and Arg-331.

It belongs to the RuvB family. Homohexamer. Forms an RuvA(8)-RuvB(12)-Holliday junction (HJ) complex. HJ DNA is sandwiched between 2 RuvA tetramers; dsDNA enters through RuvA and exits via RuvB. An RuvB hexamer assembles on each DNA strand where it exits the tetramer. Each RuvB hexamer is contacted by two RuvA subunits (via domain III) on 2 adjacent RuvB subunits; this complex drives branch migration. In the full resolvosome a probable DNA-RuvA(4)-RuvB(12)-RuvC(2) complex forms which resolves the HJ.

It localises to the cytoplasm. The enzyme catalyses ATP + H2O = ADP + phosphate + H(+). Its function is as follows. The RuvA-RuvB-RuvC complex processes Holliday junction (HJ) DNA during genetic recombination and DNA repair, while the RuvA-RuvB complex plays an important role in the rescue of blocked DNA replication forks via replication fork reversal (RFR). RuvA specifically binds to HJ cruciform DNA, conferring on it an open structure. The RuvB hexamer acts as an ATP-dependent pump, pulling dsDNA into and through the RuvAB complex. RuvB forms 2 homohexamers on either side of HJ DNA bound by 1 or 2 RuvA tetramers; 4 subunits per hexamer contact DNA at a time. Coordinated motions by a converter formed by DNA-disengaged RuvB subunits stimulates ATP hydrolysis and nucleotide exchange. Immobilization of the converter enables RuvB to convert the ATP-contained energy into a lever motion, pulling 2 nucleotides of DNA out of the RuvA tetramer per ATP hydrolyzed, thus driving DNA branch migration. The RuvB motors rotate together with the DNA substrate, which together with the progressing nucleotide cycle form the mechanistic basis for DNA recombination by continuous HJ branch migration. Branch migration allows RuvC to scan DNA until it finds its consensus sequence, where it cleaves and resolves cruciform DNA. In Polaromonas sp. (strain JS666 / ATCC BAA-500), this protein is Holliday junction branch migration complex subunit RuvB.